Consider the following 422-residue polypeptide: Adenylosuccinate synthetase (422 aa).

GTP-binding positions include 11 to 17 and 39 to 41; these read GDEGKGK and GHT. The Proton acceptor role is filled by aspartate 12. Positions 12 and 39 each coordinate Mg(2+). IMP is bound by residues 12–15, 37–40, threonine 129, arginine 143, asparagine 219, threonine 234, and arginine 298; these read DEGK and NAGH. The active-site Proton donor is histidine 40. Substrate is bound at residue 294–300; the sequence is VTTGRRR. GTP-binding positions include arginine 300, 326-328, and 409-411; these read KLD and GTG.

This sequence belongs to the adenylosuccinate synthetase family. As to quaternary structure, homodimer. It depends on Mg(2+) as a cofactor.

It localises to the cytoplasm. The catalysed reaction is IMP + L-aspartate + GTP = N(6)-(1,2-dicarboxyethyl)-AMP + GDP + phosphate + 2 H(+). It participates in purine metabolism; AMP biosynthesis via de novo pathway; AMP from IMP: step 1/2. Plays an important role in the de novo pathway and in the salvage pathway of purine nucleotide biosynthesis. Catalyzes the first committed step in the biosynthesis of AMP from IMP. This is Adenylosuccinate synthetase from Ajellomyces capsulatus (strain NAm1 / WU24) (Darling's disease fungus).